A 718-amino-acid polypeptide reads, in one-letter code: Cyclomaltodextrin glucanotransferase (718 aa).

The N-terminal stretch at methionine 1–alanine 34 is a signal peptide. Positions aspartate 35–proline 172 are A1. Ca(2+) is bound by residues aspartate 61, asparagine 63, asparagine 66, and asparagine 67. Cysteine 77 and cysteine 84 are disulfide-bonded. Glycine 85 and aspartate 87 together coordinate Ca(2+). Tyrosine 134–tryptophan 135 contributes to the substrate binding site. Position 173 (asparagine 173) interacts with Ca(2+). The tract at residues asparagine 173–histidine 236 is b. Histidine 174 provides a ligand contact to substrate. A Ca(2+)-binding site is contributed by isoleucine 224. Asparagine 227–aspartate 230 serves as a coordination point for substrate. Position 233 (aspartate 233) interacts with Ca(2+). Residues asparagine 237–tyrosine 440 form an A2 region. Arginine 261 contacts substrate. Catalysis depends on aspartate 263, which acts as the Nucleophile. Lysine 266–histidine 267 contacts substrate. Ca(2+) is bound at residue histidine 267. Glutamate 291 acts as the Proton donor in catalysis. Substrate is bound by residues histidine 361, aspartate 405, and arginine 409. The segment at glycine 441–serine 528 is c. The tract at residues glutamate 529–leucine 614 is d. The IPT/TIG domain occupies proline 532–threonine 612. The 106-residue stretch at isoleucine 613–glutamine 718 folds into the CBM20 domain. Residues serine 615–glutamine 718 form an e region.

This sequence belongs to the glycosyl hydrolase 13 family. Monomer. It depends on Ca(2+) as a cofactor.

It is found in the secreted. It carries out the reaction Cyclizes part of a (1-&gt;4)-alpha-D-glucan chain by formation of a (1-&gt;4)-alpha-D-glucosidic bond.. This is Cyclomaltodextrin glucanotransferase (cgtA) from Bacillus licheniformis.